The following is a 128-amino-acid chain: Glycine cleavage system H protein (128 aa).

Residues 25-107 (TITVGITHHA…YGAGWFFKIK (83 aa)) enclose the Lipoyl-binding domain. The residue at position 66 (lysine 66) is an N6-lipoyllysine.

This sequence belongs to the GcvH family. In terms of assembly, the glycine cleavage system is composed of four proteins: P, T, L and H. Requires (R)-lipoate as cofactor.

In terms of biological role, the glycine cleavage system catalyzes the degradation of glycine. The H protein shuttles the methylamine group of glycine from the P protein to the T protein. The chain is Glycine cleavage system H protein from Neisseria meningitidis serogroup C (strain 053442).